Here is a 386-residue protein sequence, read N- to C-terminus: Succinate--CoA ligase [ADP-forming] subunit beta (386 aa).

The ATP-grasp domain maps to 9-244; the sequence is KEILRKYGVP…HDEEDPLETR (236 aa). ATP contacts are provided by residues Lys46, 53 to 55, Glu99, Cys102, and Glu107; that span reads GRG. Mg(2+)-binding residues include Asn199 and Asp213. Substrate is bound by residues Asn264 and 321–323; that span reads GIM.

Belongs to the succinate/malate CoA ligase beta subunit family. As to quaternary structure, heterotetramer of two alpha and two beta subunits. It depends on Mg(2+) as a cofactor.

The catalysed reaction is succinate + ATP + CoA = succinyl-CoA + ADP + phosphate. The enzyme catalyses GTP + succinate + CoA = succinyl-CoA + GDP + phosphate. Its pathway is carbohydrate metabolism; tricarboxylic acid cycle; succinate from succinyl-CoA (ligase route): step 1/1. Functionally, succinyl-CoA synthetase functions in the citric acid cycle (TCA), coupling the hydrolysis of succinyl-CoA to the synthesis of either ATP or GTP and thus represents the only step of substrate-level phosphorylation in the TCA. The beta subunit provides nucleotide specificity of the enzyme and binds the substrate succinate, while the binding sites for coenzyme A and phosphate are found in the alpha subunit. The sequence is that of Succinate--CoA ligase [ADP-forming] subunit beta from Rickettsia peacockii (strain Rustic).